A 319-amino-acid chain; its full sequence is Chromoplast-specific carotenoid-associated protein C1, chromoplastic (319 aa).

The N-terminal 55 residues, 1-55 (MTSIAFWNAFTVNPFPAAARRSPPPLTPFTSGALSPARKPRILEISHPRTLPSFR), are a transit peptide targeting the chromoplast.

Belongs to the PAP/fibrillin family. Expressed in flower buds and floral lip tissues. Not detected in roots and leaves. Specifically expressed in conical papillate cells of adaxial epidermis of lip tissues.

It is found in the plastid. Its subcellular location is the chromoplast. Its function is as follows. May be involved in carotenoid sequestration within chromoplasts. This is Chromoplast-specific carotenoid-associated protein C1, chromoplastic (CHRC1) from Oncidium hybrid cultivar (Orchid).